The following is a 368-amino-acid chain: Cyanide hydratase (368 aa).

The region spanning 6 to 285 (YKAAVVTSEP…DGLMYVDIDL (280 aa)) is the CN hydrolase domain. Glutamate 46 functions as the Proton acceptor in the catalytic mechanism. The active site involves lysine 128. Residue cysteine 163 is the Nucleophile of the active site. Residues 341–368 (LDRPLEEEDYRQGTDAGETEKASSNGHA) are disordered.

It belongs to the carbon-nitrogen hydrolase superfamily. Nitrilase family. As to quaternary structure, oligomer of dimers, forming left-handed helical fibers.

The enzyme catalyses formamide = hydrogen cyanide + H2O. In terms of biological role, catalyzes the hydration of cyanide to formamide. Degradation of cyanide may be important for plant pathogenic fungi in infection of cyanogenic plants. The polypeptide is Cyanide hydratase (Microdochium sorghi (Zonate leaf spot disease fungus)).